The following is a 104-amino-acid chain: Urease subunit beta (104 aa).

The protein belongs to the urease beta subunit family. In terms of assembly, heterotrimer of UreA (gamma), UreB (beta) and UreC (alpha) subunits. Three heterotrimers associate to form the active enzyme.

The protein resides in the cytoplasm. It carries out the reaction urea + 2 H2O + H(+) = hydrogencarbonate + 2 NH4(+). It participates in nitrogen metabolism; urea degradation; CO(2) and NH(3) from urea (urease route): step 1/1. The chain is Urease subunit beta from Mycobacterium bovis (strain BCG / Pasteur 1173P2).